The sequence spans 398 residues: F-box/kelch-repeat protein At1g30090 (398 aa).

In terms of domain architecture, F-box spans Glu51–Arg98. Kelch repeat units follow at residues Pro106–Val152, Thr159–Gly207, Ile209–Gly255, Leu257–Arg304, and Leu305–Cys346.

The protein is F-box/kelch-repeat protein At1g30090 of Arabidopsis thaliana (Mouse-ear cress).